We begin with the raw amino-acid sequence, 91 residues long: Large ribosomal subunit protein eL31 (91 aa).

The protein belongs to the eukaryotic ribosomal protein eL31 family.

This chain is Large ribosomal subunit protein eL31, found in Pyrobaculum calidifontis (strain DSM 21063 / JCM 11548 / VA1).